The primary structure comprises 754 residues: MGVKELWTVLTPHAERKPINELRGKKVAIDLAGWVCESLNVVDYFVHPRHHLKNLFFRTCYLIWEQVTPVFVLEGVAPKLKGQVIAKRNELQFRGVRPKDAATGTQTAAKVDKGRTRFNHVLKQCETLLLSMGIQCVQGPGEAEAYAAFLNKHGLVDGVISQDSDCFAYGAIRVYRNFSVSTQGAQAAAGGAVDIYDMREITSRMDFGQHKIIVMALLCGCDYCPDGIGGIGKDGVLKLFNKYKESEILDRLRNWRAETDKYNALEMRVDDKSICSNCGHIGRTQSHTKSGCSVCRTKRGCDKTLWKEQRLSIKAELILRRKALLAPEFPNEEIISEFLSEPPTIPNLNLGWRQPNLVKFIKQIGHLLQWPEIYCFQKFFPILTRWQVQQAARTNAIGRVELVQPVDIIKKRTVKGVASLELRWQDPSGSFQGLIPDKQISEFELEHPKGIEELYYTVEPLDMLEAAYPDLVASFLKSKEKPPKKATRKKKTDPLSAIENIPETLDKQKANPAKPKRVVKKKKAPTEQAQPSLQQFLRREKIGGTPVKDSLPQMAQLPQQCSTPITKFLPSDLESDCDAVEFDMSDVVNGIISNPNARPTVTRHEGRQLHYEALSDDLSMRLAQLSLRKDELQEEPLPPVAEHKRDLSLVEHLPQSKRLSLDDSFDLLVKGDLKKVPHLIQPIRTPVDRFKHQHRISEHLPQPAVEPAANVSYFFNQSSDNADAFEQLMNSSLGIQEQAEEDEEEEDDLVVISD.

Residues 1–90 (MGVKELWTVL…KGQVIAKRNE (90 aa)) are N-domain. Mg(2+) is bound by residues Asp-30, Glu-74, Glu-142, Glu-144, Asp-163, Asp-165, and Asp-222. The interval 130–226 (LSMGIQCVQG…LLCGCDYCPD (97 aa)) is I-domain. Disordered regions lie at residues 479 to 533 (KEKP…QPSL) and 732 to 754 (SLGI…VISD). Positions 514–523 (KPKRVVKKKK) are enriched in basic residues. Residues 738-754 (QAEEDEEEEDDLVVISD) are compositionally biased toward acidic residues.

The protein belongs to the XPG/RAD2 endonuclease family. GEN subfamily. Mg(2+) is required as a cofactor.

It localises to the nucleus. Its function is as follows. Endonuclease which cleaves flap structures at the junction between single-stranded DNA and double-stranded DNA. Specific for 5'-overhanging flap structures in which the 5'-upstream of the flap is completely double-stranded. Prefers the blocked-flap structures similar to those occurring at replication forks, in which the 5' single-strand overhang of the flap is double-stranded. Also possesses weak 5'- to 3'-exonuclease activity on nicked but not gapped double-stranded DNA. Does not cleave bubble-like or Holliday junction substrates. This is Flap endonuclease GEN (Gen) from Drosophila pseudoobscura pseudoobscura (Fruit fly).